A 298-amino-acid chain; its full sequence is Acetylglutamate kinase (298 aa).

Residues G69 to G70, R91, and N196 each bind substrate.

Belongs to the acetylglutamate kinase family. ArgB subfamily.

It is found in the cytoplasm. It carries out the reaction N-acetyl-L-glutamate + ATP = N-acetyl-L-glutamyl 5-phosphate + ADP. The protein operates within amino-acid biosynthesis; L-arginine biosynthesis; N(2)-acetyl-L-ornithine from L-glutamate: step 2/4. Catalyzes the ATP-dependent phosphorylation of N-acetyl-L-glutamate. In Nitrobacter hamburgensis (strain DSM 10229 / NCIMB 13809 / X14), this protein is Acetylglutamate kinase.